The primary structure comprises 123 residues: Large ribosomal subunit protein uL14 (123 aa).

It belongs to the universal ribosomal protein uL14 family. In terms of assembly, part of the 50S ribosomal subunit. Forms a cluster with proteins L3 and L19. In the 70S ribosome, L14 and L19 interact and together make contacts with the 16S rRNA in bridges B5 and B8.

In terms of biological role, binds to 23S rRNA. Forms part of two intersubunit bridges in the 70S ribosome. The sequence is that of Large ribosomal subunit protein uL14 from Actinobacillus succinogenes (strain ATCC 55618 / DSM 22257 / CCUG 43843 / 130Z).